We begin with the raw amino-acid sequence, 39 residues long: Cytochrome b6-f complex subunit 5 (39 aa).

Residues 5 to 25 (LLCGIVLGLVPVTLLGLFVSA) traverse the membrane as a helical segment.

The protein belongs to the PetG family. The 4 large subunits of the cytochrome b6-f complex are cytochrome b6, subunit IV (17 kDa polypeptide, PetD), cytochrome f and the Rieske protein, while the 4 small subunits are PetG, PetL, PetM and PetN. The complex functions as a dimer.

The protein resides in the cellular thylakoid membrane. Its function is as follows. Component of the cytochrome b6-f complex, which mediates electron transfer between photosystem II (PSII) and photosystem I (PSI), cyclic electron flow around PSI, and state transitions. PetG is required for either the stability or assembly of the cytochrome b6-f complex. This Prochlorococcus marinus (strain NATL1A) protein is Cytochrome b6-f complex subunit 5.